Consider the following 325-residue polypeptide: Probable conjugal transfer protein TrbB (325 aa).

Residue 151 to 158 participates in ATP binding; that stretch reads GGTASGKT.

It belongs to the GSP E family.

It is found in the cytoplasm. The chain is Probable conjugal transfer protein TrbB (trbB) from Sinorhizobium fredii (strain NBRC 101917 / NGR234).